The following is a 617-amino-acid chain: UvrABC system protein C (617 aa).

The GIY-YIG domain occupies 22-100 (NLPGVYRFFN…IKALSPKYNI (79 aa)). Residues 209 to 244 (DELTRTLQHKMQTAAANLQFEEAARYRDQIQALGIM) form the UVR domain.

It belongs to the UvrC family. Interacts with UvrB in an incision complex.

Its subcellular location is the cytoplasm. The UvrABC repair system catalyzes the recognition and processing of DNA lesions. UvrC both incises the 5' and 3' sides of the lesion. The N-terminal half is responsible for the 3' incision and the C-terminal half is responsible for the 5' incision. The protein is UvrABC system protein C of Neisseria meningitidis serogroup B (strain ATCC BAA-335 / MC58).